The primary structure comprises 129 residues: Virion-associated protein (129 aa).

Coiled coils occupy residues 1-31 and 38-59; these read MANL…ILEL and IKES…LIND. The capsid binding stretch occupies residues 122 to 129; the sequence is PAGWPNQY.

This sequence belongs to the caulimovirus ORF III family. As to quaternary structure, homotetramer, through coiled-coil domain. Homotrimer when interacts with icosehadral capsid. Interacts with capsid protein, and with Movement protein.

It localises to the virion. The protein resides in the host cell junction. Its subcellular location is the host plasmodesma. Plays a role in virus cell-to-cell and plant-to-plant transmission. Interacts with virion icosahedral capsid and movement protein, thereby facilitating virion cell-to-cell transmission through plasmodesmata opened by viral movement protein. Also interacts with aphid transmission factor, attaching the virion to aphid stylet when the animal feeds on an virus infected plant. Aphid saliva may later detach the virion, inducing release of infectious particles when the animal feeds on a new plant. The protein is Virion-associated protein of Cauliflower mosaic virus (strain D/H) (CaMV).